The primary structure comprises 583 residues: Membrane protein insertase YidC (583 aa).

Transmembrane regions (helical) follow at residues 5-25, 341-361, 362-382, 427-447, 473-493, and 520-540; these read SVTGLAIIAVIMIVWLQFMSP, PFAEFIILPVFSWMNGFVSNY, GLIIIIFAFLIKLVTYPLSMA, IGGCLPVVLQMPLLFAMFYVF, FGFAIPMYGSHIAVFPILMAV, and AMMLLFFNNMPAGLGLYYLMF.

The protein belongs to the OXA1/ALB3/YidC family. Type 1 subfamily. Interacts with the Sec translocase complex via SecD. Specifically interacts with transmembrane segments of nascent integral membrane proteins during membrane integration.

Its subcellular location is the cell inner membrane. Required for the insertion and/or proper folding and/or complex formation of integral membrane proteins into the membrane. Involved in integration of membrane proteins that insert both dependently and independently of the Sec translocase complex, as well as at least some lipoproteins. Aids folding of multispanning membrane proteins. The sequence is that of Membrane protein insertase YidC from Pelodictyon phaeoclathratiforme (strain DSM 5477 / BU-1).